The primary structure comprises 211 residues: Ubiquitin-conjugating enzyme E2 S (211 aa).

The 147-residue stretch at 11–157 folds into the UBC core domain; sequence HIIRQVYKEV…ARLMTEIHAQ (147 aa). The active-site Glycyl thioester intermediate is cysteine 95. The tract at residues 157-211 is disordered; it reads QGSSLRGKDPTDPCSSASATLVSGDGPMAKKHAGDRDKKLAAKKKTDKKRALRRL. Residues 197–211 are compositionally biased toward basic residues; it reads AAKKKTDKKRALRRL.

This sequence belongs to the ubiquitin-conjugating enzyme family.

It catalyses the reaction S-ubiquitinyl-[E1 ubiquitin-activating enzyme]-L-cysteine + [E2 ubiquitin-conjugating enzyme]-L-cysteine = [E1 ubiquitin-activating enzyme]-L-cysteine + S-ubiquitinyl-[E2 ubiquitin-conjugating enzyme]-L-cysteine.. The protein operates within protein modification; protein ubiquitination. Functionally, catalyzes the covalent attachment of ubiquitin to other proteins. Acts as an essential factor of the anaphase promoting complex/cyclosome (APC/C), a cell cycle-regulated ubiquitin ligase that controls progression through mitosis. Acts by specifically elongating 'Lys-11'-linked polyubiquitin chains initiated by the E2 enzyme ube2c/ubch10 on APC/C substrates, enhancing the degradation of APC/C substrates by the proteasome and promoting mitotic exit. This chain is Ubiquitin-conjugating enzyme E2 S (ube2s), found in Xenopus tropicalis (Western clawed frog).